The following is a 216-amino-acid chain: Splicing factor U2AF 23 kDa subunit (216 aa).

The segment at 12–40 (EQDKVNCSFYYKIGACRHGERCSRKHVKP) adopts a C3H1-type 1 zinc-finger fold. The RRM domain occupies 44-141 (QTILCPNMYK…RPVYAELSPV (98 aa)). The C3H1-type 2 zinc-finger motif lies at 143–170 (DFREACCRQHETSECQRGGLCNFMHAKK). Residues 194 to 216 (EMKKEPNSDSTNRWVSVTAERKN) form a disordered region.

Forms a heterodimer with the U2AF large subunit. Can also form a homodimer. U2AF large subunit (U2AF59), U2AF small subunit (U2AF23) and SF1 (bpb1) interact to form a complex required for complex A formation. Interacts with cwf13.

It localises to the nucleus. Functionally, necessary for the splicing of pre-mRNA. The SF1-U2AF59-U2AF23 complex has a role in the recognition of the branch site (5'-UACUAAC-3'), the pyrimidine tract and the 3'-splice site at the 3'-end of introns. The protein is Splicing factor U2AF 23 kDa subunit of Schizosaccharomyces pombe (strain 972 / ATCC 24843) (Fission yeast).